The primary structure comprises 492 residues: Bifunctional protein GlmU (492 aa).

The tract at residues 1-241 (MTFRGDTAVL…NALVAGVNNR (241 aa)) is pyrophosphorylase. Residues 12-15 (LAAG), K26, Q83, 88-89 (GT), 112-114 (SGD), G151, E166, N181, and N239 contribute to the UDP-N-acetyl-alpha-D-glucosamine site. Mg(2+) is bound at residue D114. Position 239 (N239) interacts with Mg(2+). Residues 242-262 (VQLAELSAELNRRIVATHQVA) form a linker region. The tract at residues 263–492 (GVTIIDPATT…KQSQQKSEPD (230 aa)) is N-acetyltransferase. UDP-N-acetyl-alpha-D-glucosamine is bound by residues R344 and K362. H374 functions as the Proton acceptor in the catalytic mechanism. 2 residues coordinate UDP-N-acetyl-alpha-D-glucosamine: Y377 and N388. Residues A391, 397 to 398 (NY), S416, and A434 contribute to the acetyl-CoA site. The disordered stretch occupies residues 461–492 (VQRKRPGSAAAQAAEKASTRTGKQSQQKSEPD). The segment covering 479–492 (TRTGKQSQQKSEPD) has biased composition (polar residues).

This sequence in the N-terminal section; belongs to the N-acetylglucosamine-1-phosphate uridyltransferase family. It in the C-terminal section; belongs to the transferase hexapeptide repeat family. In terms of assembly, homotrimer. Mg(2+) is required as a cofactor.

It is found in the cytoplasm. It carries out the reaction alpha-D-glucosamine 1-phosphate + acetyl-CoA = N-acetyl-alpha-D-glucosamine 1-phosphate + CoA + H(+). The enzyme catalyses N-acetyl-alpha-D-glucosamine 1-phosphate + UTP + H(+) = UDP-N-acetyl-alpha-D-glucosamine + diphosphate. Its pathway is nucleotide-sugar biosynthesis; UDP-N-acetyl-alpha-D-glucosamine biosynthesis; N-acetyl-alpha-D-glucosamine 1-phosphate from alpha-D-glucosamine 6-phosphate (route II): step 2/2. The protein operates within nucleotide-sugar biosynthesis; UDP-N-acetyl-alpha-D-glucosamine biosynthesis; UDP-N-acetyl-alpha-D-glucosamine from N-acetyl-alpha-D-glucosamine 1-phosphate: step 1/1. It participates in bacterial outer membrane biogenesis; LPS lipid A biosynthesis. Its function is as follows. Catalyzes the last two sequential reactions in the de novo biosynthetic pathway for UDP-N-acetylglucosamine (UDP-GlcNAc). The C-terminal domain catalyzes the transfer of acetyl group from acetyl coenzyme A to glucosamine-1-phosphate (GlcN-1-P) to produce N-acetylglucosamine-1-phosphate (GlcNAc-1-P), which is converted into UDP-GlcNAc by the transfer of uridine 5-monophosphate (from uridine 5-triphosphate), a reaction catalyzed by the N-terminal domain. This Mycobacterium leprae (strain Br4923) protein is Bifunctional protein GlmU.